The primary structure comprises 394 residues: Isopentenyl-diphosphate delta-isomerase (394 aa).

10 to 11 (RK) is a substrate binding site. FMN-binding positions include Thr-67, 68–70 (GMT), Ser-101, and Asn-129. 101-103 (SQR) provides a ligand contact to substrate. Gln-168 contacts substrate. A Mg(2+)-binding site is contributed by Glu-169. FMN contacts are provided by residues Lys-200, Ser-225, Thr-230, 279 to 281 (GMR), and 300 to 301 (AL).

Belongs to the IPP isomerase type 2 family. Homooctamer. Dimer of tetramers. FMN is required as a cofactor. It depends on NADPH as a cofactor. Requires Mg(2+) as cofactor.

Its subcellular location is the cytoplasm. It catalyses the reaction isopentenyl diphosphate = dimethylallyl diphosphate. Functionally, involved in the biosynthesis of isoprenoids. Catalyzes the 1,3-allylic rearrangement of the homoallylic substrate isopentenyl (IPP) to its allylic isomer, dimethylallyl diphosphate (DMAPP). The protein is Isopentenyl-diphosphate delta-isomerase of Pyrococcus furiosus (strain ATCC 43587 / DSM 3638 / JCM 8422 / Vc1).